Here is a 274-residue protein sequence, read N- to C-terminus: Cytochrome c oxidase subunit 3 (274 aa).

At 2-15 (AHVKNHDYQILPPS) the chain is on the cytoplasmic side. Residues 16–36 (IWPFFGAIGAFVMLTGAVAWM) form a helical membrane-spanning segment. At 37–48 (KGITFFGLPVEG) the chain is on the periplasmic side. The helical transmembrane segment at 49 to 77 (PWMFLIGLVGVLYVMFGWWADVVNEGETG) threads the bilayer. Topologically, residues 78–79 (EH) are cytoplasmic. A helical transmembrane segment spans residues 80-115 (TPVVRIGLQYGFILFIMSEVMFFVAWFWAFIKNALY). Residues 116–139 (PMGPDSPIKDGVWPPEGIVTFDPW) lie on the Periplasmic side of the membrane. The helical transmembrane segment at 140–166 (HLPLINTLILLLSGVAVTWAHHAFVLE) threads the bilayer. The Cytoplasmic segment spans residues 167–168 (GD). Residues 169-197 (RKTTINGLIVAVILGVCFTGLQAYEYSHA) form a helical membrane-spanning segment. Residues 198-203 (AFGLAD) are Periplasmic-facing. The chain crosses the membrane as a helical span at residues 204-237 (TVYAGAFYMATGFHGAHVIIGTIFLFVCLIRLLK). The Cytoplasmic portion of the chain corresponds to 238-244 (GQMTQKQ). A helical membrane pass occupies residues 245–274 (HVGFEAAAWYWHFVDVVWLFLFVVIYIWGR).

It belongs to the cytochrome c oxidase subunit 3 family.

It localises to the cell inner membrane. It catalyses the reaction 4 Fe(II)-[cytochrome c] + O2 + 8 H(+)(in) = 4 Fe(III)-[cytochrome c] + 2 H2O + 4 H(+)(out). This is Cytochrome c oxidase subunit 3 (ctaE) from Paracoccus denitrificans.